The primary structure comprises 444 residues: uncharacterized protein (444 aa).

This is an uncharacterized protein from Saccharomyces cerevisiae (strain ATCC 204508 / S288c) (Baker's yeast).